The primary structure comprises 282 residues: Probable endonuclease 4 (282 aa).

Zn(2+) contacts are provided by histidine 70, histidine 110, glutamate 146, aspartate 180, histidine 183, histidine 217, aspartate 230, histidine 232, and glutamate 262.

It belongs to the AP endonuclease 2 family. The cofactor is Zn(2+).

The catalysed reaction is Endonucleolytic cleavage to 5'-phosphooligonucleotide end-products.. Endonuclease IV plays a role in DNA repair. It cleaves phosphodiester bonds at apurinic or apyrimidinic (AP) sites, generating a 3'-hydroxyl group and a 5'-terminal sugar phosphate. In Wolinella succinogenes (strain ATCC 29543 / DSM 1740 / CCUG 13145 / JCM 31913 / LMG 7466 / NCTC 11488 / FDC 602W) (Vibrio succinogenes), this protein is Probable endonuclease 4.